Reading from the N-terminus, the 86-residue chain is MLSQKTKKKHNFLNHGLSLNLVIKPYLALEGSVAFPAENGVQDTESTLEKRETGDEENSAKFPIGRRDFDTLRCMLGRVYQRCWQV.

An NGE-like region spans residues 31–49 (GSVAFPAENGVQDTESTLE). The segment at 40–60 (GVQDTESTLEKRETGDEENSA) is disordered. The interval 52–64 (ETGDEENSAKFPI) is NEI-like. Positions 68–86 (DFDTLRCMLGRVYQRCWQV) are melanin-concentrating hormone-like.

The protein belongs to the melanin-concentrating hormone family. As to expression, expressed in testis but not in brain.

The sequence is that of Putative pro-MCH-like protein 2 (PMCHL2) from Homo sapiens (Human).